The sequence spans 2512 residues: RNA replication protein (2512 aa).

The region spanning 156–367 (RLTFSKNVAH…RLDVYLDKFL (212 aa)) is the Alphavirus-like MT domain. Positions 683–803 (LTVIQVPGDG…HSHYSLLVPC (121 aa)) constitute an OTU domain. Residues 1520-1696 (AIYTSLVAHN…DFVNTEARPL (177 aa)) form the (+)RNA virus helicase ATP-binding domain. The 178-residue stretch at 1697–1874 (ARTFRSPPDV…HLSLSGGGTT (178 aa)) folds into the (+)RNA virus helicase C-terminal domain. One can recognise a RdRp catalytic domain in the interval 2265 to 2378 (FDSLEIDIKK…VGEKRDLQCD (114 aa)).

It carries out the reaction ATP + H2O = ADP + phosphate + H(+). The enzyme catalyses RNA(n) + a ribonucleoside 5'-triphosphate = RNA(n+1) + diphosphate. Its function is as follows. RNA replication. The central part of this protein possibly functions as an ATP-binding helicase (Potential). The sequence is that of RNA replication protein from Citrus leprosis virus C (isolate Citrus sinesis/Brazil/Cordeiropolis/2003) (CiLV-C).